Here is a 426-residue protein sequence, read N- to C-terminus: Serine--tRNA ligase (426 aa).

L-serine is bound at residue 233–235 (TSE). 264–266 (RAE) provides a ligand contact to ATP. L-serine is bound at residue E287. Residue 351 to 354 (EISS) coordinates ATP. Residue S387 participates in L-serine binding.

It belongs to the class-II aminoacyl-tRNA synthetase family. Type-1 seryl-tRNA synthetase subfamily. As to quaternary structure, homodimer. The tRNA molecule binds across the dimer.

It localises to the cytoplasm. The enzyme catalyses tRNA(Ser) + L-serine + ATP = L-seryl-tRNA(Ser) + AMP + diphosphate + H(+). The catalysed reaction is tRNA(Sec) + L-serine + ATP = L-seryl-tRNA(Sec) + AMP + diphosphate + H(+). It participates in aminoacyl-tRNA biosynthesis; selenocysteinyl-tRNA(Sec) biosynthesis; L-seryl-tRNA(Sec) from L-serine and tRNA(Sec): step 1/1. In terms of biological role, catalyzes the attachment of serine to tRNA(Ser). Is also able to aminoacylate tRNA(Sec) with serine, to form the misacylated tRNA L-seryl-tRNA(Sec), which will be further converted into selenocysteinyl-tRNA(Sec). The sequence is that of Serine--tRNA ligase from Xanthomonas euvesicatoria pv. vesicatoria (strain 85-10) (Xanthomonas campestris pv. vesicatoria).